We begin with the raw amino-acid sequence, 936 residues long: MEPDIIRMYSSSPPPLDNGAEDDDDDEFGEFGGFSEVSPSGVGFVDFDTPDYTRPKEEFVPSNHFMPIHEFSENVDSLTSFKSIKNGNDKDITAELSAPVKGQSDVLLSTTSKEIISSEMLATSIDGMERPGNLNKVVEQRQNVGTLESFSPGDFRTNMNVVHQNKQLESCNGEKPPCLEILTNGFAVLETVNPQGTDDLDNVADSKGRKPLSTHSTEYNLDSVPSPAEEFADFATFSKKERIQLEEIECAVLNDREALTIRENNKINRVNELNSVKEVALGRSLDNKGDTDGEDQVCVSEISIVTNRGFSVEKQGLPTLQQDEFLQSGVQSKAWSLVDSADNSEAIRREQCKTEEKLDLLTSKCAHLCMDSVKTSDDEVGSPKEESRKFTNFQSPNIDPTEENDLDDSLSVKNGDSSNDFVTCNDINEDDFGDFGDFGSASGSTPPFVTGTQDSMSDATFEESSEHFPHFSEPGDDFGEFGDINAVSCQEETILTKSDLKQTSDNLSEECQLARKSSGTGTEPVAKLKNGQEGEIGHFDSVPNIQDDCNGFQDSDDFADFSSAGPSQVVDWNAFEDEQKDSCSWAAFGDQQATESHHRKEAWQSHRTDENIDTPGTPKTHSVPSATSKGAVASGHLQESATSVQTALLNRLERIFEACFPSILVPDAEEEVTSLKHLLETSTLPIKTREALPESGELLDVWTELQDIHDAHGLRYQWGGSHSNKKLLSSLGIDTRNILFTGNKKQPVIVPMYAAGLGMLEPTKEPLKPLSAAEKIASIGQTATMSPDMNTCTSDQFQESLPPVQFDWSSSGLTNPLDASGGSTLLNLDFFGPVDDSSSSSSTTIPGVDPELYELTTSKLEISTSSLKVTDAFARLMSTVEKTSTSTRKPKREEHLSEEAIKVIAGLPDLTFMHAKVLMFPATLTPSTSSQEKADG.

The tract at residues 1-36 (MEPDIIRMYSSSPPPLDNGAEDDDDDEFGEFGGFSE) is disordered. Residues 1–523 (MEPDIIRMYS…ARKSSGTGTE (523 aa)) are interaction with AP1G1, AP1G2, GGA1 and GGA3. Acidic residues predominate over residues 19–29 (GAEDDDDDEFG). The WXXF motif 1 signature appears at 28–31 (FGEF). Ser151 bears the Phosphoserine mark. 2 disordered regions span residues 197–216 (TDDLDNVADSKGRKPLSTHS) and 374–409 (KTSDDEVGSPKEESRKFTNFQSPNIDPTEENDLDDS). The span at 374-389 (KTSDDEVGSPKEESRK) shows a compositional bias: basic and acidic residues. The segment at 386-610 (ESRKFTNFQS…EAWQSHRTDE (225 aa)) is interaction with AP1G1. Ser395 is modified (phosphoserine). The short motif at 432-435 (FGDF) is the WXXF motif 2 element. A WXXF motif 3 (partial) motif is present at residues 436–438 (GDF). The WXXF motif 4 signature appears at 478 to 481 (FGEF). Residue Ser518 is modified to Phosphoserine. A disordered region spans residues 589 to 637 (GDQQATESHHRKEAWQSHRTDENIDTPGTPKTHSVPSATSKGAVASGHL). Over residues 595–610 (ESHHRKEAWQSHRTDE) the composition is skewed to basic and acidic residues. Residue Thr617 is modified to Phosphothreonine. A compositionally biased stretch (polar residues) spans 617–628 (TPKTHSVPSATS). The short motif at 716–718 (YQW) is the CLTCL1/Clathrin-binding element. A clathrin-binding region spans residues 825-829 (LLNLD).

Self-associates. Interacts with GGA1 (via GAE domain). Interacts with GGA3 (via GAE domain), AP1G1 (via GAE domain) and AP1G2 (via GAE domain). Component of the aftiphilin/p200/gamma-synergin complex, at least composed of AFTPH/aftiphilin, HEATR5B/p200a and SYNRG/gamma-synergin, which plays a role in the AP1G1/AP-1-mediated protein trafficking from early to recycling endosomes. Within the complex interacts with HEATR5B/p200a and SYNRG/gamma-synergin; the interactions are direct. Interacts with AP1G1/AP-1; the interaction is required to recruit AFTPH/aftiphilin to the perinuclear region of the cell. Interacts with CLTCL1/Clathrin.

The protein resides in the cytoplasm. Its subcellular location is the perinuclear region. It is found in the cytoplasmic vesicle. The protein localises to the clathrin-coated vesicle. Component of clathrin-coated vesicles. Component of the aftiphilin/p200/gamma-synergin complex, which plays roles in AP1G1/AP-1-mediated protein trafficking including the trafficking of transferrin from early to recycling endosomes, and the membrane trafficking of furin and the lysosomal enzyme cathepsin D between the trans-Golgi network (TGN) and endosomes. The polypeptide is Aftiphilin (AFTPH) (Homo sapiens (Human)).